Consider the following 1151-residue polypeptide: uncharacterized protein (1151 aa).

5 disordered regions span residues 611 to 633 (FVKG…DEEE), 709 to 740 (NLVP…IMEV), 753 to 778 (PPIL…KSIL), 795 to 880 (PPVI…PPKL), and 1060 to 1151 (LKEP…TQQE). Pro residues-rich tracts occupy residues 754 to 773 (PILP…PQEP) and 811 to 842 (IVPP…PSQP). The span at 867–878 (PITPDTPAITPP) shows a compositional bias: low complexity. Residues 1082-1091 (ESDNEDDELD) are compositionally biased toward acidic residues. Residues 1131–1142 (PVDTSDATKIST) are compositionally biased toward polar residues.

This is an uncharacterized protein from Ostreid herpesvirus 1 (isolate France) (OsHV-1).